Reading from the N-terminus, the 250-residue chain is Pyrroloquinoline-quinone synthase (250 aa).

The protein belongs to the PqqC family.

It catalyses the reaction 6-(2-amino-2-carboxyethyl)-7,8-dioxo-1,2,3,4,7,8-hexahydroquinoline-2,4-dicarboxylate + 3 O2 = pyrroloquinoline quinone + 2 H2O2 + 2 H2O + H(+). It functions in the pathway cofactor biosynthesis; pyrroloquinoline quinone biosynthesis. Ring cyclization and eight-electron oxidation of 3a-(2-amino-2-carboxyethyl)-4,5-dioxo-4,5,6,7,8,9-hexahydroquinoline-7,9-dicarboxylic-acid to PQQ. The sequence is that of Pyrroloquinoline-quinone synthase from Pseudomonas aeruginosa (strain LESB58).